The following is a 220-amino-acid chain: MSSANTNTSSAPDAPPRAVMKVAVLAESELGSEAQRERRKRILDATMAIASKGGYEAVQMRAVADRADVAVGTLYRYFPSKVHLLVSALGREFSRIDAKTDRSAVAGATPFQRLNFMVGKLNRAMQRNPLLTEAMTRAYVFADASAASEVDQVEKLIDSMFARAMANGEPTEDQYHIARVISDVWLSNLLAWLTRRASATDVSKRLDLAVRLLIGDQDSA.

In terms of domain architecture, HTH tetR-type spans 36–96 (RERRKRILDA…SALGREFSRI (61 aa)). The H-T-H motif DNA-binding region spans 59–78 (QMRAVADRADVAVGTLYRYF).

Homodimer.

Controls the expression of genes used for utilizing diverse lipids as energy sources. This chain is HTH-type transcriptional repressor KstR (kstR), found in Mycobacterium tuberculosis (strain ATCC 25618 / H37Rv).